The chain runs to 138 residues: Large ribosomal subunit protein bL17 (138 aa).

It belongs to the bacterial ribosomal protein bL17 family. In terms of assembly, part of the 50S ribosomal subunit. Contacts protein L32.

This is Large ribosomal subunit protein bL17 from Jannaschia sp. (strain CCS1).